A 387-amino-acid polypeptide reads, in one-letter code: Probable NADH-dependent butanol dehydrogenase 1 (387 aa).

Belongs to the iron-containing alcohol dehydrogenase family.

The protein operates within alcohol metabolism; butanol biosynthesis. The sequence is that of Probable NADH-dependent butanol dehydrogenase 1 (yugJ) from Bacillus subtilis (strain 168).